Reading from the N-terminus, the 1001-residue chain is Integrator complex subunit 7 (1001 aa).

Positions 980-1001 are disordered; it reads DPSKQGAPAPSTSQAVGQTRRF. Over residues 989-1001 the composition is skewed to polar residues; that stretch reads PSTSQAVGQTRRF.

This sequence belongs to the Integrator subunit 7 family. As to quaternary structure, belongs to the multiprotein complex Integrator, at least composed of IntS1, IntS2, IntS3, IntS4, omd/IntS5, IntS6, defl/IntS7, IntS8, IntS9, IntS10, IntS11, IntS12, asun/IntS13, IntS14 and IntS15. The core complex associates with protein phosphatase 2A subunits mts/PP2A and Pp2A-29B, to form the Integrator-PP2A (INTAC) complex.

The protein resides in the nucleus. Its subcellular location is the cytoplasm. Functionally, component of the integrator complex, a multiprotein complex that terminates RNA polymerase II (Pol II) transcription in the promoter-proximal region of genes. The integrator complex provides a quality checkpoint during transcription elongation by driving premature transcription termination of transcripts that are unfavorably configured for transcriptional elongation: the complex terminates transcription by (1) catalyzing dephosphorylation of the C-terminal domain (CTD) of Pol II subunit Polr2A/Rbp1 and Spt5, and (2) degrading the exiting nascent RNA transcript via endonuclease activity. The integrator complex is also involved in the 3'-end processing of the U7 snRNA, and also the spliceosomal snRNAs U1, U2, U4 and U5. The polypeptide is Integrator complex subunit 7 (Drosophila melanogaster (Fruit fly)).